The sequence spans 265 residues: uncharacterized protein (265 aa).

A disordered region spans residues 122-145 (THYRDNGQTPPRDTRPHGGISLGG).

This is an uncharacterized protein from Zymomonas mobilis subsp. mobilis (strain ATCC 31821 / ZM4 / CP4).